A 689-amino-acid chain; its full sequence is MSEEPVSGTTVEIEEDTHTPPNSPVLETFSLSPEPEAEACPNTDRYLSANLLCKHLQRQSAIVLDSIKDQLQVPTSVSELSCAYERSLLCPNIPPKQQSNGTCEANPKLNFYPTFLVPETLATYHIFFVNQKIPVSCKANRAKADKALTLQEGDCLPDYETMDTVSRVFEGLGGEVVAENALQNNDSVLVELKEDNPRLAVLKRNLSVSHFAYPAVHLPPKIITTVMNNLLVKRANPSADVSELDPDGGQEVVSDTELSRWLNTSDPETLEKQRKLVMGSVLVTVVLECMQRLFTSKDMVKKIGETLHYTFRHGYVSLACKISNVELTNVVTYMGILHENRLGQTTLHHTIQGETRRDYIRDSIFLILIHTWQTAMGIWQQCLEEENLKELAKLVQKIKKPLYTETSQRLMGKQLANVVFPPKLLETFNKGLPDIVNQSMMQNFRSFILERSGILPSMTCALPTDFIPIHFKECPPTMWPYTYLLRLANFFMYHNDLCYDMEGEGLLEHYCRCNLCTPHRCLATNPAMLNETQLIGTFDIRGPGGENGAESSSGLKLTAGMWTSAFLRKFESSDYHAHKIHFYENQSKPPSVEPTPCVITQSSILAQLHDIKKAREEFLLKKGQGQYLDPHTGEPLNAAGPSVESGHEFQGDGRHREPKRGRHFRQRGGPRKPPRAHAGGEPDVRGTTS.

A disordered region spans residues 1–24 (MSEEPVSGTTVEIEEDTHTPPNSP). The segment at 226-289 (VMNNLLVKRA…SVLVTVVLEC (64 aa)) is binding to host EIF4G. The RRM domain occupies 292-410 (RLFTSKDMVK…PLYTETSQRL (119 aa)). Residues Y309 and Y627 each carry the phosphotyrosine; by host modification. Residues 625-689 (GQYLDPHTGE…GEPDVRGTTS (65 aa)) are disordered. Residues 645–655 (SGHEFQGDGRH) are compositionally biased toward basic and acidic residues. Residues 656-675 (REPKRGRHFRQRGGPRKPPR) show a composition bias toward basic residues. Residues 678 to 689 (AGGEPDVRGTTS) show a composition bias toward basic and acidic residues.

The protein belongs to the adenoviridae shutoff protein family. As to quaternary structure, monomer. Interacts with hexon protein; this interaction allows chaperoning and trimerization of hexon proteins. Interacts (via N-terminus) with host initiation factor EIF4G (via C-terminus). Interacts (via RRM domain) with viral mRNAs that contain the tripartite leader; this interaction allows ribosome shunting and expression of viral late mRNAs. Post-translationally, might be cleaved by the viral protease. Phosphorylated. Tyrosine phosphorylation enhances preferential binding to tripartite leader mRNAs and allows ribosome shunting. In terms of processing, methylated. Asymmetric dimethylation by host PRMT1 of the Arg/Gly-rich region may regulate shutoff protein binding to hexon and promote the capsid assembly in the nucleus.

The protein resides in the host cytoplasm. Protein that inhibits host translation while promoting late viral translation by ribosome shunting. Blocks host cap-dependent translation by binding to eIF4G, displacing MKNK1 from cap initiation complexes and preventing EIF4E phosphorylation. Binds to the tripartite leader sequence of viral late mRNAs and recruits host eIF4G, PABPC1/poly-A binding protein and 40S ribosomes subunits on viral mRNAs, allowing ribosome shunting and efficient translation of late viral mRNAs even though conventional translation via ribosome scanning from the cap has been shut off in the host cell. During assembly, acts as a chaperone protein that helps hexon proteins assembly into trimers. The protein is Shutoff protein of Canis lupus familiaris (Dog).